The sequence spans 208 residues: Protein-L-isoaspartate O-methyltransferase (208 aa).

Ser-59 is an active-site residue.

It belongs to the methyltransferase superfamily. L-isoaspartyl/D-aspartyl protein methyltransferase family.

Its subcellular location is the cytoplasm. The enzyme catalyses [protein]-L-isoaspartate + S-adenosyl-L-methionine = [protein]-L-isoaspartate alpha-methyl ester + S-adenosyl-L-homocysteine. Functionally, catalyzes the methyl esterification of L-isoaspartyl residues in peptides and proteins that result from spontaneous decomposition of normal L-aspartyl and L-asparaginyl residues. It plays a role in the repair and/or degradation of damaged proteins. In Photorhabdus laumondii subsp. laumondii (strain DSM 15139 / CIP 105565 / TT01) (Photorhabdus luminescens subsp. laumondii), this protein is Protein-L-isoaspartate O-methyltransferase.